The following is a 374-amino-acid chain: Secondary metabolism regulator laeA (374 aa).

Residues 1 to 75 form a disordered region; the sequence is MFEMGPVGTR…NRNGSPSMSP (75 aa). Positions 23 to 40 are enriched in polar residues; it reads SYHSPTSSDRGRSRQNSD. M207 carries the S-methylmethionine modification.

Belongs to the methyltransferase superfamily. LaeA methyltransferase family. As to quaternary structure, component of the heterotrimeric velvet complex composed of laeA, veA and velB; VeA acting as a bridging protein between laeA and velB. Self-methylates at Met-207.

The protein resides in the nucleus. The catalysed reaction is L-methionyl-[protein] + S-adenosyl-L-methionine = S-methyl-L-methionyl-[protein] + S-adenosyl-L-homocysteine. Its function is as follows. Methyltransferase that performs automethylation at Met-207. No other methyl-accepting substrate has been identified yet. Component of the velvet transcription factor complex that acts as a global regulator for secondary metabolite gene expression. Controls the expression of the sterigmatocystin, penicillin, and lovastatin gene clusters. Controls light-dependent formation of the velB-vosA complex, veA protein modification, and is required for light-mediated inhibition of sexual development. Within the velvet complex, controls light-dependent secondary metabolism. Involved in the defense response against Drosophila melanogaster larval grazing. This chain is Secondary metabolism regulator laeA, found in Emericella nidulans (Aspergillus nidulans).